A 314-amino-acid chain; its full sequence is Malate dehydrogenase (314 aa).

NAD(+) is bound by residues 7–12 (GAGNVG) and D32. Residues R81 and R87 each coordinate substrate. NAD(+) is bound by residues N94 and 117-119 (VAN). 2 residues coordinate substrate: N119 and R150. The active-site Proton acceptor is the H174.

Belongs to the LDH/MDH superfamily. MDH type 3 family.

The catalysed reaction is (S)-malate + NAD(+) = oxaloacetate + NADH + H(+). Functionally, catalyzes the reversible oxidation of malate to oxaloacetate. The chain is Malate dehydrogenase from Salinibacter ruber (strain DSM 13855 / M31).